The following is a 785-amino-acid chain: Endonuclease MutS2 (785 aa).

Residue 335-342 (GPNTGGKT) coordinates ATP. The region spanning 710 to 785 (LDLRGERYED…GNGVTIVEFK (76 aa)) is the Smr domain.

Belongs to the DNA mismatch repair MutS family. MutS2 subfamily. In terms of assembly, homodimer. Binds to stalled ribosomes, contacting rRNA.

Its function is as follows. Endonuclease that is involved in the suppression of homologous recombination and thus may have a key role in the control of bacterial genetic diversity. Functionally, acts as a ribosome collision sensor, splitting the ribosome into its 2 subunits. Detects stalled/collided 70S ribosomes which it binds and splits by an ATP-hydrolysis driven conformational change. Acts upstream of the ribosome quality control system (RQC), a ribosome-associated complex that mediates the extraction of incompletely synthesized nascent chains from stalled ribosomes and their subsequent degradation. Probably generates substrates for RQC. This chain is Endonuclease MutS2, found in Listeria monocytogenes serotype 4b (strain CLIP80459).